A 142-amino-acid polypeptide reads, in one-letter code: Large ribosomal subunit protein uL11 (142 aa).

Part of the ribosomal stalk of the 50S ribosomal subunit. Interacts with L10 and the large rRNA to form the base of the stalk. L10 forms an elongated spine to which L12 dimers bind in a sequential fashion forming a multimeric L10(L12)X complex. Lys-40 is trimethylated or acetylated; other modifications may also exist.

Forms part of the ribosomal stalk which helps the ribosome interact with GTP-bound translation factors. The chain is Large ribosomal subunit protein uL11 from Rhodopseudomonas palustris (strain ATCC BAA-98 / CGA009).